Consider the following 276-residue polypeptide: Dermonecrotic toxin LlSicTox-alphaIV2iii (276 aa).

The active site involves His5. Positions 25 and 27 each coordinate Mg(2+). The active-site Nucleophile is His41. 2 cysteine pairs are disulfide-bonded: Cys45/Cys51 and Cys47/Cys193. Asp85 lines the Mg(2+) pocket.

It belongs to the arthropod phospholipase D family. Class II subfamily. Requires Mg(2+) as cofactor. As to expression, expressed by the venom gland.

Its subcellular location is the secreted. It carries out the reaction an N-(acyl)-sphingosylphosphocholine = an N-(acyl)-sphingosyl-1,3-cyclic phosphate + choline. The catalysed reaction is an N-(acyl)-sphingosylphosphoethanolamine = an N-(acyl)-sphingosyl-1,3-cyclic phosphate + ethanolamine. The enzyme catalyses a 1-acyl-sn-glycero-3-phosphocholine = a 1-acyl-sn-glycero-2,3-cyclic phosphate + choline. It catalyses the reaction a 1-acyl-sn-glycero-3-phosphoethanolamine = a 1-acyl-sn-glycero-2,3-cyclic phosphate + ethanolamine. Functionally, dermonecrotic toxins cleave the phosphodiester linkage between the phosphate and headgroup of certain phospholipids (sphingolipid and lysolipid substrates), forming an alcohol (often choline) and a cyclic phosphate. This toxin acts on sphingomyelin (SM). It may also act on ceramide phosphoethanolamine (CPE), lysophosphatidylcholine (LPC) and lysophosphatidylethanolamine (LPE), but not on lysophosphatidylserine (LPS), and lysophosphatidylglycerol (LPG). It acts by transphosphatidylation, releasing exclusively cyclic phosphate products as second products. Induces dermonecrosis, hemolysis, increased vascular permeability, edema, inflammatory response, and platelet aggregation. The chain is Dermonecrotic toxin LlSicTox-alphaIV2iii from Loxosceles laeta (South American recluse spider).